Here is a 171-residue protein sequence, read N- to C-terminus: Large ribosomal subunit protein bL9 (171 aa).

This sequence belongs to the bacterial ribosomal protein bL9 family.

Its function is as follows. Binds to the 23S rRNA. The sequence is that of Large ribosomal subunit protein bL9 from Rickettsia africae (strain ESF-5).